Here is a 71-residue protein sequence, read N- to C-terminus: NAD(P)H-quinone oxidoreductase subunit O (71 aa).

It belongs to the complex I NdhO subunit family. NDH-1 can be composed of about 15 different subunits; different subcomplexes with different compositions have been identified which probably have different functions.

Its subcellular location is the cellular thylakoid membrane. It carries out the reaction a plastoquinone + NADH + (n+1) H(+)(in) = a plastoquinol + NAD(+) + n H(+)(out). It catalyses the reaction a plastoquinone + NADPH + (n+1) H(+)(in) = a plastoquinol + NADP(+) + n H(+)(out). Functionally, NDH-1 shuttles electrons from an unknown electron donor, via FMN and iron-sulfur (Fe-S) centers, to quinones in the respiratory and/or the photosynthetic chain. The immediate electron acceptor for the enzyme in this species is believed to be plastoquinone. Couples the redox reaction to proton translocation, and thus conserves the redox energy in a proton gradient. Cyanobacterial NDH-1 also plays a role in inorganic carbon-concentration. In Picosynechococcus sp. (strain ATCC 27264 / PCC 7002 / PR-6) (Agmenellum quadruplicatum), this protein is NAD(P)H-quinone oxidoreductase subunit O.